We begin with the raw amino-acid sequence, 469 residues long: 6-phospho-beta-galactosidase (469 aa).

Residues Gln18, His115, Asn158, Glu159, and Asn296 each contribute to the D-galactose 6-phosphate site. Glu159 (proton donor) is an active-site residue. Glu374 (nucleophile) is an active-site residue. Positions 429, 430, 436, and 438 each coordinate D-galactose 6-phosphate.

The protein belongs to the glycosyl hydrolase 1 family.

The enzyme catalyses a 6-phospho-beta-D-galactoside + H2O = D-galactose 6-phosphate + an alcohol. Its pathway is carbohydrate metabolism; lactose degradation; D-galactose 6-phosphate and beta-D-glucose from lactose 6-phosphate: step 1/1. In Staphylococcus haemolyticus (strain JCSC1435), this protein is 6-phospho-beta-galactosidase.